A 37-amino-acid polypeptide reads, in one-letter code: Large ribosomal subunit protein bL36c (37 aa).

It belongs to the bacterial ribosomal protein bL36 family.

The protein localises to the plastid. It localises to the chloroplast. This is Large ribosomal subunit protein bL36c (rpl36) from Porphyra purpurea (Red seaweed).